A 256-amino-acid chain; its full sequence is Phosphatidylglycerol--prolipoprotein diacylglyceryl transferase (256 aa).

A run of 3 helical transmembrane segments spans residues V19–W39, L56–Y76, and I91–L111. R139 contacts a 1,2-diacyl-sn-glycero-3-phospho-(1'-sn-glycerol). A helical transmembrane segment spans residues F231 to L251.

Belongs to the Lgt family.

The protein resides in the cell inner membrane. The enzyme catalyses L-cysteinyl-[prolipoprotein] + a 1,2-diacyl-sn-glycero-3-phospho-(1'-sn-glycerol) = an S-1,2-diacyl-sn-glyceryl-L-cysteinyl-[prolipoprotein] + sn-glycerol 1-phosphate + H(+). It functions in the pathway protein modification; lipoprotein biosynthesis (diacylglyceryl transfer). Functionally, catalyzes the transfer of the diacylglyceryl group from phosphatidylglycerol to the sulfhydryl group of the N-terminal cysteine of a prolipoprotein, the first step in the formation of mature lipoproteins. The sequence is that of Phosphatidylglycerol--prolipoprotein diacylglyceryl transferase from Legionella pneumophila (strain Paris).